The sequence spans 160 residues: Lymphocyte antigen 86 (160 aa).

The signal sequence occupies residues 1–20; it reads MKTLNVLALVLVLLCINAST. 3 cysteine pairs are disulfide-bonded: C28–C53, C40–C149, and C97–C107.

In terms of assembly, M-shaped tetramer of two CD180-LY86 heterodimers. As to expression, detected in the macrophage-like 10.4 cells.

It localises to the secreted. Its subcellular location is the extracellular space. Its function is as follows. May cooperate with CD180 and TLR4 to mediate the innate immune response to bacterial lipopolysaccharide (LPS) and cytokine production. Important for efficient CD180 cell surface expression. The polypeptide is Lymphocyte antigen 86 (LY86) (Gallus gallus (Chicken)).